A 148-amino-acid chain; its full sequence is MTIADNKKAFFDYFIEERYEAGMALEGWEVKAIRANRAQIKEGYVVIRNAELFLIGAHISPLQSASTHVHPDPVRTRKLLLHAEEIKKLIGKVEQRGYTLVPLNLHYTRGRVKCEIGLAKGKKQFDKRETEKDRDWQREKARLMREKA.

The segment at 124 to 148 (QFDKRETEKDRDWQREKARLMREKA) is disordered.

It belongs to the SmpB family.

It is found in the cytoplasm. Required for rescue of stalled ribosomes mediated by trans-translation. Binds to transfer-messenger RNA (tmRNA), required for stable association of tmRNA with ribosomes. tmRNA and SmpB together mimic tRNA shape, replacing the anticodon stem-loop with SmpB. tmRNA is encoded by the ssrA gene; the 2 termini fold to resemble tRNA(Ala) and it encodes a 'tag peptide', a short internal open reading frame. During trans-translation Ala-aminoacylated tmRNA acts like a tRNA, entering the A-site of stalled ribosomes, displacing the stalled mRNA. The ribosome then switches to translate the ORF on the tmRNA; the nascent peptide is terminated with the 'tag peptide' encoded by the tmRNA and targeted for degradation. The ribosome is freed to recommence translation, which seems to be the essential function of trans-translation. In Ralstonia pickettii (strain 12J), this protein is SsrA-binding protein.